Consider the following 120-residue polypeptide: Large ribosomal subunit protein bL20 (120 aa).

Belongs to the bacterial ribosomal protein bL20 family.

Functionally, binds directly to 23S ribosomal RNA and is necessary for the in vitro assembly process of the 50S ribosomal subunit. It is not involved in the protein synthesizing functions of that subunit. In Pseudoalteromonas translucida (strain TAC 125), this protein is Large ribosomal subunit protein bL20.